The following is a 381-amino-acid chain: Galactose-1-phosphate uridylyltransferase (381 aa).

Zn(2+)-binding residues include C65 and C68. 90–91 (ND) serves as a coordination point for UDP-alpha-D-glucose. H131 contributes to the Zn(2+) binding site. N175 is a binding site for UDP-alpha-D-glucose. H186 serves as a coordination point for Zn(2+). H188 functions as the Tele-UMP-histidine intermediate in the catalytic mechanism. Q190 serves as a coordination point for UDP-alpha-D-glucose. 4 residues coordinate Fe cation: E204, H306, H323, and H325. UDP-alpha-D-glucose contacts are provided by residues 338 to 341 (KFMV) and 343 to 344 (FE).

The protein belongs to the galactose-1-phosphate uridylyltransferase type 1 family. Homodimer. It depends on Zn(2+) as a cofactor.

The enzyme catalyses alpha-D-galactose 1-phosphate + UDP-alpha-D-glucose = alpha-D-glucose 1-phosphate + UDP-alpha-D-galactose. It participates in carbohydrate metabolism; galactose metabolism. The sequence is that of Galactose-1-phosphate uridylyltransferase (GAL7) from Cryptococcus neoformans var. neoformans serotype D (strain B-3501A) (Filobasidiella neoformans).